The primary structure comprises 142 residues: Mitochondrial import receptor subunit TOM22 homolog (142 aa).

Over residues 1 to 11 the composition is skewed to low complexity; the sequence is MAAAVAAAGAG. The tract at residues 1–40 is disordered; it reads MAAAVAAAGAGEPLSPEELVPKAEAEKAEEDLEEDDDDEL. The residue at position 2 (alanine 2) is an N-acetylalanine. Residues 2–82 are Cytoplasmic-facing; that stretch reads AAAVAAAGAG…VAQKMYRFSR (81 aa). Serine 15 carries the post-translational modification Phosphoserine. A compositionally biased stretch (acidic residues) spans 27–40; it reads KAEEDLEEDDDDEL. The segment at 41-50 is import sequence; necessary for mitochondrion outer membrane localization and integration in the TOM complex; sequence DETLSERLWG. Threonine 43 is modified (phosphothreonine). Residue serine 45 is modified to Phosphoserine. A helical transmembrane segment spans residues 83-103; it reads AALWIGTTSFMILVLPVVFET. The interval 83 to 103 is TMD; necessary for mitochondrion outer membrane localization and integration in the TOM complex; sequence AALWIGTTSFMILVLPVVFET. At 104 to 142 the chain is on the mitochondrial intermembrane side; the sequence is EKLQMEQQQQLQQRQILLGPNTGLSGGMPGALPPLPGKI. Positions 123-142 are C-tail signal; necessary for mitochondrion outer membrane localization and integration in the TOM complex; it reads PNTGLSGGMPGALPPLPGKI.

This sequence belongs to the Tom22 family. In terms of assembly, forms part of the preprotein translocase complex of the outer mitochondrial membrane (TOM complex) which consists of at least 7 different proteins (TOMM5, TOMM6, TOMM7, TOMM20, TOMM22, TOMM40 and TOMM70). Interacts with TOMM40. Interacts with PPP2R2B.

It is found in the mitochondrion outer membrane. Functionally, central receptor component of the translocase of the outer membrane of mitochondria (TOM complex) responsible for the recognition and translocation of cytosolically synthesized mitochondrial preproteins. Together with the peripheral receptor TOM20 functions as the transit peptide receptor and facilitates the movement of preproteins into the translocation pore. Required for the translocation across the mitochondrial outer membrane of cytochrome P450 monooxygenases. This is Mitochondrial import receptor subunit TOM22 homolog (Tomm22) from Rattus norvegicus (Rat).